A 54-amino-acid chain; its full sequence is Potassium channel toxin alpha-KTx 14.x (54 aa).

Residues 1 to 23 (MKIFFAILLILAVCSMAIWTVNG) form the signal peptide. Intrachain disulfides connect cysteine 30–cysteine 46, cysteine 36–cysteine 51, and cysteine 40–cysteine 53.

It belongs to the short scorpion toxin superfamily. Potassium channel inhibitor family. Alpha-KTx 14 subfamily. Expressed by the venom gland.

It is found in the secreted. Its function is as follows. Potassium channels inhibitor. This Olivierus martensii (Manchurian scorpion) protein is Potassium channel toxin alpha-KTx 14.x.